The primary structure comprises 239 residues: 1-(5-phosphoribosyl)-5-[(5-phosphoribosylamino)methylideneamino] imidazole-4-carboxamide isomerase (239 aa).

The Proton acceptor role is filled by D12. The active-site Proton donor is the D133.

Belongs to the HisA/HisF family.

It is found in the cytoplasm. It catalyses the reaction 1-(5-phospho-beta-D-ribosyl)-5-[(5-phospho-beta-D-ribosylamino)methylideneamino]imidazole-4-carboxamide = 5-[(5-phospho-1-deoxy-D-ribulos-1-ylimino)methylamino]-1-(5-phospho-beta-D-ribosyl)imidazole-4-carboxamide. It participates in amino-acid biosynthesis; L-histidine biosynthesis; L-histidine from 5-phospho-alpha-D-ribose 1-diphosphate: step 4/9. This chain is 1-(5-phosphoribosyl)-5-[(5-phosphoribosylamino)methylideneamino] imidazole-4-carboxamide isomerase, found in Sulfurihydrogenibium sp. (strain YO3AOP1).